The chain runs to 274 residues: MRLAVTGVTGRMGKSIIQRIIQTQAHQVDNKFILGAAIARDRSDICGIDAGTFVQSSKVGVFITDNIELVKGDFDVLIDFTAPESTMNYVNFCVMNNKNMVIGTTGLSKSYLSVIERASSKIGIVYSANFSVGITIMLKLLNSVSKISRYFVNIDIVESHHNKKKDIPSGTALLIRNVVEYNQFSDCVCNEDLVSNGEKKYGKLDNDIKIHSIRAGDIVGEHSVLCTSIGERLEIKHQAFNRIIFVDGALRSAVWLGCAKIGLFDLNNVLKINM.

NAD(+) is bound at residue 7-12 (GVTGRM). Arginine 40 is a binding site for NADP(+). Residues 103–105 (GTT) and 127–130 (SANF) contribute to the NAD(+) site. Histidine 160 acts as the Proton donor/acceptor in catalysis. Histidine 161 contributes to the (S)-2,3,4,5-tetrahydrodipicolinate binding site. Lysine 164 (proton donor) is an active-site residue. 170-171 (GT) lines the (S)-2,3,4,5-tetrahydrodipicolinate pocket.

This sequence belongs to the DapB family. In terms of assembly, homotetramer.

Its subcellular location is the cytoplasm. The enzyme catalyses (S)-2,3,4,5-tetrahydrodipicolinate + NAD(+) + H2O = (2S,4S)-4-hydroxy-2,3,4,5-tetrahydrodipicolinate + NADH + H(+). It carries out the reaction (S)-2,3,4,5-tetrahydrodipicolinate + NADP(+) + H2O = (2S,4S)-4-hydroxy-2,3,4,5-tetrahydrodipicolinate + NADPH + H(+). The protein operates within amino-acid biosynthesis; L-lysine biosynthesis via DAP pathway; (S)-tetrahydrodipicolinate from L-aspartate: step 4/4. Functionally, catalyzes the conversion of 4-hydroxy-tetrahydrodipicolinate (HTPA) to tetrahydrodipicolinate. The polypeptide is 4-hydroxy-tetrahydrodipicolinate reductase (Blochmanniella floridana).